Here is a 251-residue protein sequence, read N- to C-terminus: Endoglucanase CX (251 aa).

Belongs to the glycosyl hydrolase 9 (cellulase E) family.

It catalyses the reaction Endohydrolysis of (1-&gt;4)-beta-D-glucosidic linkages in cellulose, lichenin and cereal beta-D-glucans.. Degrades carboxymethylcellulose (CMC). This Prunus persica (Peach) protein is Endoglucanase CX.